The primary structure comprises 781 residues: Acyl-CoA dehydrogenase family member 11 (781 aa).

Lysine 177 bears the N6-acetyllysine mark. Phosphotyrosine is present on tyrosine 325. Lysine 392 carries the post-translational modification N6-succinyllysine. FAD contacts are provided by residues 505–515 (FCMTEPDVASS), 513–515 (ASS), 539–541 (WSS), and serine 541. Serine 515 is a binding site for substrate. Substrate is bound at residue 630 to 633 (GPGR). FAD is bound by residues arginine 658, glutamine 728, and 728-732 (QVCGG). Glycine 756 lines the substrate pocket. Residues 757–759 (PDE) and glutamate 759 each bind FAD.

Belongs to the acyl-CoA dehydrogenase family. In terms of assembly, homodimer. It depends on FAD as a cofactor.

The protein localises to the peroxisome. Its subcellular location is the mitochondrion membrane. The enzyme catalyses a 2,3-saturated acyl-CoA + oxidized [electron-transfer flavoprotein] + H(+) = a (2E)-enoyl-CoA + reduced [electron-transfer flavoprotein]. It catalyses the reaction docosanoyl-CoA + oxidized [electron-transfer flavoprotein] + H(+) = (2E)-docosenoyl-CoA + reduced [electron-transfer flavoprotein]. It carries out the reaction tetracosanoyl-CoA + oxidized [electron-transfer flavoprotein] + H(+) = (2E)-tetracosenoyl-CoA + reduced [electron-transfer flavoprotein]. The catalysed reaction is eicosanoyl-CoA + oxidized [electron-transfer flavoprotein] + H(+) = (2E)-eicosenoyl-CoA + reduced [electron-transfer flavoprotein]. The enzyme catalyses hexacosanoyl-CoA + oxidized [electron-transfer flavoprotein] + H(+) = (2E)-hexacosenoyl-CoA + reduced [electron-transfer flavoprotein]. It catalyses the reaction tricosanoyl-CoA + oxidized [electron-transfer flavoprotein] + H(+) = (2E)-tricosenoyl-CoA + reduced [electron-transfer flavoprotein]. It participates in lipid metabolism; fatty acid beta-oxidation. Functionally, acyl-CoA dehydrogenase, that exhibits maximal activity towards saturated C22-CoA. Probably participates in beta-oxydation and energy production but could also play a role in the metabolism of specific fatty acids to control fatty acids composition of cellular lipids in brain. In Pongo abelii (Sumatran orangutan), this protein is Acyl-CoA dehydrogenase family member 11 (ACAD11).